Reading from the N-terminus, the 1180-residue chain is DNA-directed RNA polymerase subunit beta' (1180 aa).

Positions 60, 62, 75, and 78 each coordinate Zn(2+). Mg(2+)-binding residues include D449, D451, and D453. 4 residues coordinate Zn(2+): C792, C872, C879, and C882.

Belongs to the RNA polymerase beta' chain family. In terms of assembly, the RNAP catalytic core consists of 2 alpha, 1 beta, 1 beta' and 1 omega subunit. When a sigma factor is associated with the core the holoenzyme is formed, which can initiate transcription. Mg(2+) serves as cofactor. The cofactor is Zn(2+).

The catalysed reaction is RNA(n) + a ribonucleoside 5'-triphosphate = RNA(n+1) + diphosphate. DNA-dependent RNA polymerase catalyzes the transcription of DNA into RNA using the four ribonucleoside triphosphates as substrates. The sequence is that of DNA-directed RNA polymerase subunit beta' from Heliobacterium modesticaldum (strain ATCC 51547 / Ice1).